The chain runs to 773 residues: Carnitine O-palmitoyltransferase 1, liver isoform (773 aa).

An N-acetylalanine modification is found at alanine 2. Residues 2-47 (AEAHQAVAFQFTVTPDGIDLRLSHEALKQICLSGLHSWKKKFIRFK) lie on the Cytoplasmic side of the membrane. A helical membrane pass occupies residues 48 to 73 (NGIITGVFPANPSSWLIVVVGVISSM). At 74–102 (HAKVDPSLGMIAKISRTLDTTGRMSSQTK) the chain is on the mitochondrial intermembrane side. Residues 103–122 (NIVSGVLFGTGLWVAVIMTM) form a helical membrane-spanning segment. Residues 123 to 773 (RYSLKVLLSY…LFGLTINSKK (651 aa)) lie on the Cytoplasmic side of the membrane. The residue at position 282 (tyrosine 282) is a 3'-nitrotyrosine. Histidine 473 functions as the Proton acceptor in the catalytic mechanism. Residue 555 to 567 (GKGLIKKCRTSPD) coordinates CoA. Phosphothreonine is present on threonine 588. A 3'-nitrotyrosine modification is found at tyrosine 589. Tyrosine 589 and threonine 602 together coordinate (R)-carnitine. A Phosphothreonine modification is found at threonine 604. Serine 741 and serine 747 each carry phosphoserine.

Belongs to the carnitine/choline acetyltransferase family. In terms of assembly, homohexamer and homotrimer. Identified in a complex that contains at least CPT1A, ACSL1 and VDAC1. Also identified in complexes with ACSL1 and VDAC2 and VDAC3. Interacts with ZDHHC4. In terms of tissue distribution, liver and kidney.

The protein resides in the mitochondrion outer membrane. It carries out the reaction (R)-carnitine + hexadecanoyl-CoA = O-hexadecanoyl-(R)-carnitine + CoA. It catalyses the reaction succinyl-CoA + L-lysyl-[protein] = N(6)-succinyl-L-lysyl-[protein] + CoA + H(+). It functions in the pathway lipid metabolism; fatty acid beta-oxidation. With respect to regulation, inhibited by malonyl-CoA. Functionally, catalyzes the transfer of the acyl group of long-chain fatty acid-CoA conjugates onto carnitine, an essential step for the mitochondrial uptake of long-chain fatty acids and their subsequent beta-oxidation in the mitochondrion. Also possesses a lysine succinyltransferase activity that can regulate enzymatic activity of substrate proteins such as ENO1 and metabolism independent of its classical carnitine O-palmitoyltransferase activity. Plays an important role in hepatic triglyceride metabolism. Also plays a role in inducible regulatory T-cell (iTreg) differentiation once activated by butyryl-CoA that antagonizes malonyl-CoA-mediated CPT1A repression. Sustains the IFN-I response by recruiting ZDHCC4 to palmitoylate MAVS at the mitochondria leading to MAVS stabilization and activation. The protein is Carnitine O-palmitoyltransferase 1, liver isoform (Cpt1a) of Rattus norvegicus (Rat).